A 190-amino-acid chain; its full sequence is Potassium-transporting ATPase KdpC subunit (190 aa).

The chain crosses the membrane as a helical span at residues 10-30; it reads TFLFLLLITGGVYPLLTTALG.

The protein belongs to the KdpC family. As to quaternary structure, the system is composed of three essential subunits: KdpA, KdpB and KdpC.

Its subcellular location is the cell inner membrane. Part of the high-affinity ATP-driven potassium transport (or Kdp) system, which catalyzes the hydrolysis of ATP coupled with the electrogenic transport of potassium into the cytoplasm. This subunit acts as a catalytic chaperone that increases the ATP-binding affinity of the ATP-hydrolyzing subunit KdpB by the formation of a transient KdpB/KdpC/ATP ternary complex. The polypeptide is Potassium-transporting ATPase KdpC subunit (Escherichia coli O6:H1 (strain CFT073 / ATCC 700928 / UPEC)).